Consider the following 215-residue polypeptide: MKTVLLTGFDPFGGESINPAWEVAKSLHEKTIGEYKIISKQVPTVFHKSISVLKEYIEELAPEFIICIGQAGGRTDITIERVAINIDDARIADNEGNQPVDVPVVEEGPAAYWSTLPMKAIVKKLQEEGIPASVSQTAGTFVCNHLFYGLMHELEKHDTKMKGGFIHIPFLPEQASNYPGQPSMSLSTIRKGIELAVEVTTTVEVDIVEIGGTTH.

Residues Glu-80, Cys-143, and His-167 contribute to the active site.

Belongs to the peptidase C15 family. Homotetramer.

The protein resides in the cytoplasm. It carries out the reaction Release of an N-terminal pyroglutamyl group from a polypeptide, the second amino acid generally not being Pro.. Removes 5-oxoproline from various penultimate amino acid residues except L-proline. The polypeptide is Pyrrolidone-carboxylate peptidase (Bacillus thuringiensis (strain Al Hakam)).